Here is a 513-residue protein sequence, read N- to C-terminus: Activin receptor type-2A (513 aa).

Positions Met-1–Gly-19 are cleaved as a signal peptide. Topologically, residues Ala-20–Pro-135 are extracellular. Disulfide bonds link Cys-30–Cys-60, Cys-50–Cys-78, Cys-85–Cys-104, Cys-91–Cys-103, and Cys-105–Cys-110. N-linked (GlcNAc...) asparagine glycans are attached at residues Asn-43 and Asn-66. A helical membrane pass occupies residues Tyr-136–Tyr-161. At Arg-162–Leu-513 the chain is on the cytoplasmic side. One can recognise a Protein kinase domain in the interval Leu-192–Leu-485. ATP contacts are provided by residues Lys-198–Val-206 and Lys-219. The Proton acceptor role is filled by Asp-322.

This sequence belongs to the protein kinase superfamily. TKL Ser/Thr protein kinase family. TGFB receptor subfamily. In terms of assembly, part of a complex consisting of MAGI2/ARIP1, ACVR2A, ACVR1B and SMAD3. Interacts with MAGI2/ARIP1. Interacts with type I receptor ACVR1. Interacts with BMP7. Interacts with TSC22D1/TSC-22. Interacts with activin A/INHBA. Requires Mg(2+) as cofactor. The cofactor is Mn(2+).

Its subcellular location is the cell membrane. The catalysed reaction is L-threonyl-[receptor-protein] + ATP = O-phospho-L-threonyl-[receptor-protein] + ADP + H(+). It catalyses the reaction L-seryl-[receptor-protein] + ATP = O-phospho-L-seryl-[receptor-protein] + ADP + H(+). Its function is as follows. On ligand binding, forms a receptor complex consisting of two type II and two type I transmembrane serine/threonine kinases. Type II receptors phosphorylate and activate type I receptors which autophosphorylate, then bind and activate SMAD transcriptional regulators. Receptor for activin A, activin B and inhibin A. Mediates induction of adipogenesis by GDF6. The sequence is that of Activin receptor type-2A (ACVR2A) from Bos taurus (Bovine).